A 320-amino-acid polypeptide reads, in one-letter code: UPF0053 protein in cps region (320 aa).

The helical transmembrane segment at 4–24 (CLSFLLMIGFSLIAEGFSFII) threads the bilayer. 2 consecutive CBS domains span residues 121–183 (MTSR…PLDL) and 186–244 (LVRQ…PNEV).

This sequence belongs to the UPF0053 family.

The protein localises to the cell membrane. The polypeptide is UPF0053 protein in cps region (Klebsiella pneumoniae).